We begin with the raw amino-acid sequence, 497 residues long: Inactive metallocarboxypeptidase ecm14 (497 aa).

The signal sequence occupies residues 1-28; sequence MAYNKSLKSLVFILLASQIVFVLFLCYG. The propeptide occupies 29-148; the sequence is KSSRELGVKW…TLFESIVPDT (120 aa). Residues 182 to 492 form the Peptidase M14 domain; that stretch reads SYQNLESINS…AMILYYGEFI (311 aa). Histidine 248 and glutamate 251 together coordinate Zn(2+). Residues 248–251 and 323–324 each bind substrate; these read HARE and DA. A disulfide bridge connects residues cysteine 317 and cysteine 337. Histidine 377 is a Zn(2+) binding site. A substrate-binding site is contributed by 378 to 379; the sequence is SY.

Belongs to the peptidase M14 family. The cofactor is Zn(2+).

The protein resides in the endoplasmic reticulum. The protein localises to the secreted. Functionally, inactive carboxypeptidase that may play a role in cell wall organization and biogenesis. This Schizosaccharomyces pombe (strain 972 / ATCC 24843) (Fission yeast) protein is Inactive metallocarboxypeptidase ecm14.